Consider the following 415-residue polypeptide: Gamma-glutamyl phosphate reductase (415 aa).

The protein belongs to the gamma-glutamyl phosphate reductase family.

Its subcellular location is the cytoplasm. The catalysed reaction is L-glutamate 5-semialdehyde + phosphate + NADP(+) = L-glutamyl 5-phosphate + NADPH + H(+). It functions in the pathway amino-acid biosynthesis; L-proline biosynthesis; L-glutamate 5-semialdehyde from L-glutamate: step 2/2. Catalyzes the NADPH-dependent reduction of L-glutamate 5-phosphate into L-glutamate 5-semialdehyde and phosphate. The product spontaneously undergoes cyclization to form 1-pyrroline-5-carboxylate. This is Gamma-glutamyl phosphate reductase from Thermotoga petrophila (strain ATCC BAA-488 / DSM 13995 / JCM 10881 / RKU-1).